The following is a 289-amino-acid chain: 33 kDa chaperonin (289 aa).

Intrachain disulfides connect cysteine 229/cysteine 231 and cysteine 262/cysteine 265.

Belongs to the HSP33 family. Under oxidizing conditions two disulfide bonds are formed involving the reactive cysteines. Under reducing conditions zinc is bound to the reactive cysteines and the protein is inactive.

The protein localises to the cytoplasm. In terms of biological role, redox regulated molecular chaperone. Protects both thermally unfolding and oxidatively damaged proteins from irreversible aggregation. Plays an important role in the bacterial defense system toward oxidative stress. This is 33 kDa chaperonin from Pectobacterium carotovorum subsp. carotovorum (strain PC1).